The sequence spans 1099 residues: Solute carrier family 12 member 1 (1099 aa).

The Cytoplasmic segment spans residues 1 to 177 (MSLNNSSSVF…EDNKAGAVKF (177 aa)). The RFXV motif motif lies at 20–23 (RFQV). Phosphoserine is present on residues serine 60 and serine 90. Residues threonine 94, threonine 99, threonine 104, and threonine 117 each carry the phosphothreonine modification. At serine 119 the chain carries Phosphoserine. Serine 129 carries the post-translational modification Phosphoserine; by AMPK. The residue at position 147 (serine 147) is a Phosphoserine. The interval 147–169 (SADRVANGEGMPGEEHAENKEED) is disordered. A compositionally biased stretch (basic and acidic residues) spans 159–169 (GEEHAENKEED). A helical transmembrane segment spans residues 178–198 (GWVKGVLVRCMLNIWGVMLFI). Over 199-201 (RLS) the chain is Extracellular. Residues 202–222 (WIVGEAGIGLGVVIILLSTMV) traverse the membrane as a helical segment. The Cytoplasmic segment spans residues 223-259 (TSITGLSTSAIATNGFVRGGGAYYLISRSLGPEFGGS). Residues 260–280 (IGLIFAFANAVAVAMYVVGFA) traverse the membrane as a helical segment. Over 281-302 (ETVVDLLKESDSMMVDPTNDIR) the chain is Extracellular. Residues 303–323 (IIGSITVVILLGISVAGMEWE) form a helical membrane-spanning segment. The Cytoplasmic segment spans residues 324–327 (AKAQ). Residues 328–348 (VILLIILLIAIANFFIGTVIP) traverse the membrane as a helical segment. Topologically, residues 349-379 (SNNEKKSRGFFNYQASIFAENFGPSFTKGEG) are extracellular. Residues 380–400 (FFSVFAIFFPAATGILAGANI) form a helical membrane-spanning segment. Topologically, residues 401–417 (SGDLEDPQDAIPRGTML) are cytoplasmic. Residues 418–438 (AIFITTVAYIGVAICVGACVV) form a helical membrane-spanning segment. Topologically, residues 439–550 (RDATGSMNDT…NNEPLRGYIL (112 aa)) are extracellular. N-linked (GlcNAc...) asparagine glycosylation is found at asparagine 446 and asparagine 456. 2 helical membrane-spanning segments follow: residues 551-571 (TFVI…APII) and 572-592 (SNFF…ASYA). Over 593 to 609 (KSPGWRPAYGIYNMWVS) the chain is Extracellular. Residues 610–630 (LFGAVLCCAVMFVINWWAAVI) form a helical membrane-spanning segment. The Cytoplasmic portion of the chain corresponds to 631–1099 (TYVIEFFLYI…NHKNVLTFYS (469 aa)).

It belongs to the SLC12A transporter family. When phosphorylated, interacts with PPP3CB. In terms of processing, phosphorylated at Ser-90, Thr-99 and Thr-104 by OXSR1/OSR1 and STK39/SPAK downstream of WNK kinases (WNK1, WNK2, WNK3 or WNK4), promoting its activity. Predominant in kidney. The 3 isoforms are differentially distributed within the kidney: B almost exclusively in cortex, F almost exclusively in medulla, and A about equally distributed.

The protein resides in the apical cell membrane. The catalysed reaction is K(+)(out) + 2 chloride(out) + Na(+)(out) = K(+)(in) + 2 chloride(in) + Na(+)(in). Activated following phosphorylation by OXSR1/OSR1 and STK39/SPAK downstream of WNK kinases (WNK1, WNK2, WNK3 or WNK4). In terms of biological role, renal sodium, potassium and chloride ion cotransporter that mediates the transepithelial NaCl reabsorption in the thick ascending limb and plays an essential role in the urinary concentration and volume regulation. Electrically silent transporter system. In Oryctolagus cuniculus (Rabbit), this protein is Solute carrier family 12 member 1 (SLC12A1).